Consider the following 483-residue polypeptide: Triplex capsid protein 1 (483 aa).

The short motif at 24–40 (LLGNNRFIQIGNGLHMT) is the RIP homotypic interaction motif (RHIM) element.

This sequence belongs to the herpesviridae TRX1 protein family. As to quaternary structure, interacts with TRX2, MCP and capsid vertex component 2/CVC2. Self-assembles into homo-oligomeric amyloid fibrils. Interacts with host ZBP1; this interaction prevents host necroptosis and extrinsic apoptosis. Interacts with host RIPK3.

The protein localises to the virion. It is found in the host nucleus. Structural component of the T=16 icosahedral capsid. The capsid is composed of pentamers and hexamers of major capsid protein/MCP, which are linked together by heterotrimers called triplexes. These triplexes are formed by a single molecule of triplex protein 1/TRX1 and two copies of triplex protein 2/TRX2. Additionally, TRX1 is required for efficient transport of TRX2 to the nucleus, which is the site of capsid assembly. Also prevents necroptosis and extrinsic apoptosis by sequestering host ZBP1 into large, insoluble supercomplexes and impairing its ability to interact with RIPK3. The protein is Triplex capsid protein 1 of Varicella-zoster virus (strain Dumas) (HHV-3).